The chain runs to 225 residues: pH-response regulator palI/RIM9 homolog 2 (225 aa).

The Cytoplasmic segment spans residues 1–4 (MLVK). Residues 5–25 (IVLVVLLTLALVFECFSTISV) traverse the membrane as a helical segment. Residues 26–87 (PITIGLYISE…PNHAKYALSN (62 aa)) are Extracellular-facing. A helical transmembrane segment spans residues 88–108 (LLLVHVLAFVCVTILWVFGML). Over 109-120 (TCFRCIKTSRRM) the chain is Cytoplasmic. The helical transmembrane segment at 121 to 141 (LIIAVLWSMLTFMVTLLGFLI) threads the bilayer. Residues 142 to 153 (DILIFSSHVTWC) are Extracellular-facing. The chain crosses the membrane as a helical span at residues 154–174 (TWLTLASAFFTVLSGTVLCVM). At 175-225 (RRNLTYDKFLESKPEKHGVYVPLCRLNDVEELEIPWCNTMNHQALTAPTPM) the chain is on the cytoplasmic side.

Belongs to the palI/RIM9 family.

The protein localises to the cell membrane. Required for the proteolytic cleavage of the transcription factor RIM101 in response to alkaline ambient pH. This chain is pH-response regulator palI/RIM9 homolog 2, found in Kluyveromyces lactis (strain ATCC 8585 / CBS 2359 / DSM 70799 / NBRC 1267 / NRRL Y-1140 / WM37) (Yeast).